The primary structure comprises 490 residues: tRNA-guanine(15) transglycosylase (490 aa).

Residue D92 is the Nucleophile of the active site. Substrate is bound by residues D127 and A195. C278, C280, and C283 together coordinate Zn(2+).

Belongs to the archaeosine tRNA-ribosyltransferase family. It depends on Zn(2+) as a cofactor.

It carries out the reaction guanosine(15) in tRNA + 7-cyano-7-deazaguanine = 7-cyano-7-carbaguanosine(15) in tRNA + guanine. Its pathway is tRNA modification; archaeosine-tRNA biosynthesis. Its function is as follows. Exchanges the guanine residue with 7-cyano-7-deazaguanine (preQ0) at position 15 in the dihydrouridine loop (D-loop) of archaeal tRNAs. This is tRNA-guanine(15) transglycosylase from Haloarcula marismortui (strain ATCC 43049 / DSM 3752 / JCM 8966 / VKM B-1809) (Halobacterium marismortui).